Here is a 336-residue protein sequence, read N- to C-terminus: Probable long-chain-alcohol O-fatty-acyltransferase 8 (336 aa).

A run of 8 helical transmembrane segments spans residues 7–27 (SFVK…YIPS), 38–58 (SVLP…FTIF), 59–79 (SSTT…LFAF), 82–102 (GPLL…CLPI), 117–135 (WVFF…VHNY), 152–172 (LYLV…IILG), 228–248 (MGCW…YFYI), and 284–304 (PMLS…FLFF).

It belongs to the wax synthase family.

The protein localises to the membrane. It carries out the reaction a long chain fatty alcohol + a fatty acyl-CoA = a wax ester + CoA. Catalyzes the final step in the synthesis of long-chain linear esters (waxes). The chain is Probable long-chain-alcohol O-fatty-acyltransferase 8 from Arabidopsis thaliana (Mouse-ear cress).